The chain runs to 409 residues: Glucose-1-phosphate adenylyltransferase (409 aa).

Residues Gly168, 183-184, and Ser201 contribute to the alpha-D-glucose 1-phosphate site; that span reads EK.

Belongs to the bacterial/plant glucose-1-phosphate adenylyltransferase family. Homotetramer.

The enzyme catalyses alpha-D-glucose 1-phosphate + ATP + H(+) = ADP-alpha-D-glucose + diphosphate. It participates in glycan biosynthesis; glycogen biosynthesis. Involved in the biosynthesis of ADP-glucose, a building block required for the elongation reactions to produce glycogen. Catalyzes the reaction between ATP and alpha-D-glucose 1-phosphate (G1P) to produce pyrophosphate and ADP-Glc. This chain is Glucose-1-phosphate adenylyltransferase, found in Corynebacterium glutamicum (strain R).